A 339-amino-acid polypeptide reads, in one-letter code: Ketol-acid reductoisomerase (NADP(+)) (339 aa).

Residues 1–182 (MRVYYDRDAD…GGGRSGIIET (182 aa)) enclose the KARI N-terminal Rossmann domain. Residues 24–27 (YGSQ), Lys-48, Ser-51, Thr-53, and 83–86 (DELQ) each bind NADP(+). Residue His-108 is part of the active site. Gly-134 serves as a coordination point for NADP(+). In terms of domain architecture, KARI C-terminal knotted spans 183–328 (NFKEECETDL…AKLRAMMPWI (146 aa)). Asp-191, Glu-195, Glu-227, and Glu-231 together coordinate Mg(2+). A substrate-binding site is contributed by Ser-252.

The protein belongs to the ketol-acid reductoisomerase family. The cofactor is Mg(2+).

The enzyme catalyses (2R)-2,3-dihydroxy-3-methylbutanoate + NADP(+) = (2S)-2-acetolactate + NADPH + H(+). The catalysed reaction is (2R,3R)-2,3-dihydroxy-3-methylpentanoate + NADP(+) = (S)-2-ethyl-2-hydroxy-3-oxobutanoate + NADPH + H(+). The protein operates within amino-acid biosynthesis; L-isoleucine biosynthesis; L-isoleucine from 2-oxobutanoate: step 2/4. It functions in the pathway amino-acid biosynthesis; L-valine biosynthesis; L-valine from pyruvate: step 2/4. In terms of biological role, involved in the biosynthesis of branched-chain amino acids (BCAA). Catalyzes an alkyl-migration followed by a ketol-acid reduction of (S)-2-acetolactate (S2AL) to yield (R)-2,3-dihydroxy-isovalerate. In the isomerase reaction, S2AL is rearranged via a Mg-dependent methyl migration to produce 3-hydroxy-3-methyl-2-ketobutyrate (HMKB). In the reductase reaction, this 2-ketoacid undergoes a metal-dependent reduction by NADPH to yield (R)-2,3-dihydroxy-isovalerate. This Rhizobium meliloti (strain 1021) (Ensifer meliloti) protein is Ketol-acid reductoisomerase (NADP(+)).